The sequence spans 356 residues: MGACMSKNDEETEQKKRSQKIDRDLEEDSKKLRKECKILLLGSGESGKSTIVKQMKIIHLKGYSDEELTNYRPTVYKNLLECAKAVVNAMHQFDIQPADPSLRPYVEFLQDYNMEGCPPGQSIDPKVGTAIQALWNDPAKEQLMERQTEFYLMDSAEYFFTEVMRIVAEDYRPNEMDVLRARTKTTGIYETRFKMGQLSIHMFDVGGQRSERKKWIHCFENVTSIIFCVALSEYDQVLLEESSQNRMMESLLLFDSVVNSRWFMRTSIILFLNKVDIFKQKLGRSPLGNYFPDYSGGNDVNKAAKYLLWRFNQVNRAHLNLYPHLTQATDTSNIRLVFAAVKETILNNALKDSGIL.

Residues 1-26 are disordered; the sequence is MGACMSKNDEETEQKKRSQKIDRDLE. Gly-2 carries N-myristoyl glycine lipidation. Cys-4 carries the S-palmitoyl cysteine lipid modification. Basic and acidic residues predominate over residues 7 to 23; that stretch reads KNDEETEQKKRSQKIDR. Residues 34-356 form the G-alpha domain; sequence KECKILLLGS…NNALKDSGIL (323 aa). The interval 37–50 is G1 motif; it reads KILLLGSGESGKST. GTP-binding positions include 42-49, 179-185, 204-208, 273-276, and Ala-328; these read GSGESGKS, LRARTKT, DVGGQ, and NKVD. Mg(2+) contacts are provided by Ser-49 and Thr-185. The interval 177 to 185 is G2 motif; that stretch reads DVLRARTKT. The segment at 200-209 is G3 motif; the sequence is IHMFDVGGQR. A G4 motif region spans residues 269 to 276; it reads ILFLNKVD. Residues 326–331 form a G5 motif region; it reads TQATDT.

Belongs to the G-alpha family. G(q) subfamily. In terms of assembly, g proteins are composed of 3 units; alpha, beta and gamma. The alpha chain contains the guanine nucleotide binding site.

In terms of biological role, guanine nucleotide-binding proteins (G proteins) are involved as modulators or transducers in various transmembrane signaling systems. Involved in conidiation. In Neurospora crassa (strain ATCC 24698 / 74-OR23-1A / CBS 708.71 / DSM 1257 / FGSC 987), this protein is Guanine nucleotide-binding protein alpha-3 subunit (gna-3).